The following is a 26-amino-acid chain: uncharacterized protein (26 aa).

Over residues 1-16 (MPEQKANCSPNGNITV) the composition is skewed to polar residues. A disordered region spans residues 1-26 (MPEQKANCSPNGNITVDSMIMSLGSS).

This is an uncharacterized protein from Saccharomyces cerevisiae (strain ATCC 204508 / S288c) (Baker's yeast).